Here is a 94-residue protein sequence, read N- to C-terminus: Large ribosomal subunit protein bL25 (94 aa).

This sequence belongs to the bacterial ribosomal protein bL25 family. Part of the 50S ribosomal subunit; part of the 5S rRNA/L5/L18/L25 subcomplex. Contacts the 5S rRNA. Binds to the 5S rRNA independently of L5 and L18.

Functionally, this is one of the proteins that binds to the 5S RNA in the ribosome where it forms part of the central protuberance. This is Large ribosomal subunit protein bL25 from Salmonella agona (strain SL483).